A 289-amino-acid chain; its full sequence is 3-methyl-2-oxobutanoate hydroxymethyltransferase (289 aa).

Residues 1 to 10 (MSDSKSSAST) are compositionally biased toward low complexity. Residues 1–33 (MSDSKSSASTSEDRLYGSAPSHDVPKRKTRTHH) are disordered. Mg(2+) contacts are provided by D70 and D109. Residues 70-71 (DS), D109, and K139 each bind 3-methyl-2-oxobutanoate. E141 lines the Mg(2+) pocket. Catalysis depends on E207, which acts as the Proton acceptor.

Belongs to the PanB family. Homodecamer; pentamer of dimers. Requires Mg(2+) as cofactor.

It is found in the cytoplasm. The enzyme catalyses 3-methyl-2-oxobutanoate + (6R)-5,10-methylene-5,6,7,8-tetrahydrofolate + H2O = 2-dehydropantoate + (6S)-5,6,7,8-tetrahydrofolate. Its pathway is cofactor biosynthesis; (R)-pantothenate biosynthesis; (R)-pantoate from 3-methyl-2-oxobutanoate: step 1/2. Functionally, catalyzes the reversible reaction in which hydroxymethyl group from 5,10-methylenetetrahydrofolate is transferred onto alpha-ketoisovalerate to form ketopantoate. In Rhodococcus jostii (strain RHA1), this protein is 3-methyl-2-oxobutanoate hydroxymethyltransferase.